A 191-amino-acid polypeptide reads, in one-letter code: dTTP/UTP pyrophosphatase (191 aa).

Asp-69 acts as the Proton acceptor in catalysis.

Belongs to the Maf family. YhdE subfamily. A divalent metal cation serves as cofactor.

It is found in the cytoplasm. It carries out the reaction dTTP + H2O = dTMP + diphosphate + H(+). The enzyme catalyses UTP + H2O = UMP + diphosphate + H(+). Its function is as follows. Nucleoside triphosphate pyrophosphatase that hydrolyzes dTTP and UTP. May have a dual role in cell division arrest and in preventing the incorporation of modified nucleotides into cellular nucleic acids. This chain is dTTP/UTP pyrophosphatase, found in Desulforamulus reducens (strain ATCC BAA-1160 / DSM 100696 / MI-1) (Desulfotomaculum reducens).